Reading from the N-terminus, the 215-residue chain is Pyridoxine/pyridoxamine 5'-phosphate oxidase (215 aa).

Residues 9–12 and K69 each bind substrate; that span reads RRDY. FMN is bound by residues 64-69, 79-80, K86, and Q108; these read RVLLLK and FS. Y126, R130, and S134 together coordinate substrate. FMN-binding positions include 143–144 and W188; that span reads QS. 194 to 196 provides a ligand contact to substrate; it reads RLH. R198 contacts FMN.

The protein belongs to the pyridoxamine 5'-phosphate oxidase family. As to quaternary structure, homodimer. FMN is required as a cofactor.

The enzyme catalyses pyridoxamine 5'-phosphate + O2 + H2O = pyridoxal 5'-phosphate + H2O2 + NH4(+). It catalyses the reaction pyridoxine 5'-phosphate + O2 = pyridoxal 5'-phosphate + H2O2. Its pathway is cofactor metabolism; pyridoxal 5'-phosphate salvage; pyridoxal 5'-phosphate from pyridoxamine 5'-phosphate: step 1/1. It functions in the pathway cofactor metabolism; pyridoxal 5'-phosphate salvage; pyridoxal 5'-phosphate from pyridoxine 5'-phosphate: step 1/1. Its function is as follows. Catalyzes the oxidation of either pyridoxine 5'-phosphate (PNP) or pyridoxamine 5'-phosphate (PMP) into pyridoxal 5'-phosphate (PLP). This is Pyridoxine/pyridoxamine 5'-phosphate oxidase from Ectopseudomonas mendocina (strain ymp) (Pseudomonas mendocina).